Reading from the N-terminus, the 48-residue chain is Large ribosomal subunit protein bL32c (48 aa).

It belongs to the bacterial ribosomal protein bL32 family.

Its subcellular location is the plastid. It is found in the chloroplast. The protein is Large ribosomal subunit protein bL32c (rpl32) of Vicia faba (Broad bean).